We begin with the raw amino-acid sequence, 182 residues long: Adenine phosphoribosyltransferase (182 aa).

It belongs to the purine/pyrimidine phosphoribosyltransferase family. In terms of assembly, homodimer.

Its subcellular location is the cytoplasm. It carries out the reaction AMP + diphosphate = 5-phospho-alpha-D-ribose 1-diphosphate + adenine. The protein operates within purine metabolism; AMP biosynthesis via salvage pathway; AMP from adenine: step 1/1. Functionally, catalyzes a salvage reaction resulting in the formation of AMP, that is energically less costly than de novo synthesis. The protein is Adenine phosphoribosyltransferase of Streptomyces coelicolor (strain ATCC BAA-471 / A3(2) / M145).